The sequence spans 416 residues: Multifunctional CCA protein (416 aa).

The ATP site is built by Gly-8 and Arg-11. CTP contacts are provided by Gly-8 and Arg-11. Positions 21 and 23 each coordinate Mg(2+). 3 residues coordinate ATP: Arg-91, Arg-137, and Arg-140. The CTP site is built by Arg-91, Arg-137, and Arg-140. The HD domain occupies 228-329 (TGVHTLMVLA…VKIFDKADFW (102 aa)).

Belongs to the tRNA nucleotidyltransferase/poly(A) polymerase family. Bacterial CCA-adding enzyme type 1 subfamily. As to quaternary structure, monomer. Can also form homodimers and oligomers. It depends on Mg(2+) as a cofactor. Ni(2+) serves as cofactor.

The catalysed reaction is a tRNA precursor + 2 CTP + ATP = a tRNA with a 3' CCA end + 3 diphosphate. It catalyses the reaction a tRNA with a 3' CCA end + 2 CTP + ATP = a tRNA with a 3' CCACCA end + 3 diphosphate. In terms of biological role, catalyzes the addition and repair of the essential 3'-terminal CCA sequence in tRNAs without using a nucleic acid template. Adds these three nucleotides in the order of C, C, and A to the tRNA nucleotide-73, using CTP and ATP as substrates and producing inorganic pyrophosphate. tRNA 3'-terminal CCA addition is required both for tRNA processing and repair. Also involved in tRNA surveillance by mediating tandem CCA addition to generate a CCACCA at the 3' terminus of unstable tRNAs. While stable tRNAs receive only 3'-terminal CCA, unstable tRNAs are marked with CCACCA and rapidly degraded. The polypeptide is Multifunctional CCA protein (Shewanella baltica (strain OS155 / ATCC BAA-1091)).